The following is a 467-amino-acid chain: Probable endopeptidase p60 (467 aa).

An N-terminal signal peptide occupies residues 1–27 (MNMKKATIAATAGIAVTAFAAPTIASA). One can recognise a LysM 1 domain in the interval 28–71 (STVVVEAGDTLWGIAQSKGTTVDAIKKANNLTTDKIVPGQKLQV). One can recognise an SH3b domain in the interval 79–143 (KAEKSVSATW…VNGKYLTDKA (65 aa)). Disordered regions lie at residues 154–199 (KKET…QNAT) and 247–348 (KTVA…GSTN). Positions 172-185 (KQPTTQQTAPAPKA) are enriched in low complexity. Positions 199 to 242 (TTHNVKSGDTIWALSVKYGVSVQDIMSWNNLSSSSIYVGQKLAI) constitute a LysM 2 domain. A compositionally biased stretch (low complexity) spans 288-348 (TEQQTTTKAP…NTNTNQGSTN (61 aa)). Positions 330–343 (TNTNTNTNTNTNTN) are 7 X 2 AA tandem repeats of T-N. The 119-residue stretch at 349 to 467 (NASASALIAE…GKFLVGFGRV (119 aa)) folds into the NlpC/P60 domain. Cys379 (nucleophile) is an active-site residue. His429 (proton acceptor) is an active-site residue. Asn441 is a catalytic residue.

This sequence belongs to the peptidase C40 family.

In terms of biological role, this major extracellular protein may be involved in the invasion of non-professional phagocytic cells by Listeria. The protein is Probable endopeptidase p60 (iap) of Listeria innocua serovar 6a (strain ATCC BAA-680 / CLIP 11262).